Consider the following 102-residue polypeptide: Integration host factor subunit alpha (102 aa).

The protein belongs to the bacterial histone-like protein family. In terms of assembly, heterodimer of an alpha and a beta chain.

In terms of biological role, this protein is one of the two subunits of integration host factor, a specific DNA-binding protein that functions in genetic recombination as well as in transcriptional and translational control. In Chromohalobacter salexigens (strain ATCC BAA-138 / DSM 3043 / CIP 106854 / NCIMB 13768 / 1H11), this protein is Integration host factor subunit alpha.